Here is a 124-residue protein sequence, read N- to C-terminus: Magnetosome protein MamC (124 aa).

Residues 2 to 8 (PFHLAPY) are Cytoplasmic-facing. Residues 9–29 (LAKSVPGVGVLGALVGGAAAL) traverse the membrane as a helical segment. The Lumenal segment spans residues 30-64 (AKNVRLLKEKRITNTEAAIDTGKETVGAGLATALS). The MIC, when fused with the C-terminus of maltose-binding protein (MBP) or expressed as a fragment, improves quality of iron particles during precipitation experiments, binds magnetite stretch occupies residues 36–56 (LKEKRITNTEAAIDTGKETVG). Residues 65 to 85 (AVAATAVGGGLVVSLGTALVA) traverse the membrane as a helical segment. The Cytoplasmic portion of the chain corresponds to 86–124 (GVAAKYAWDRGVDLVEKELNRGKAANGASDEDILRDELA).

It belongs to the magnetosome MamC family. Probably interacts with MamA.

It localises to the magnetosome membrane. In terms of biological role, probably involved in magnetite crystal growth. The lumenal domain may bind the magnetite crystals, affecting crystal size and shape. The sequence is that of Magnetosome protein MamC from Paramagnetospirillum magneticum (strain ATCC 700264 / AMB-1) (Magnetospirillum magneticum).